A 463-amino-acid chain; its full sequence is Histone acetyltransferase mst1 (463 aa).

In terms of domain architecture, Tudor-knot spans 22–74; the sequence is VYKSKVFAFKDGEYRKAEILMIQKRTRGVVYYVHYNDYNKRLDEWITIDNIDL. The interval 76-145 is disordered; that stretch reads KGIEYPPPEK…GSNAGNESLP (70 aa). Over residues 87 to 99 the composition is skewed to basic residues; sequence KKAHGKGKSSKRP. Residues 111 to 121 are compositionally biased toward low complexity; the sequence is PSKTEPSTPST. Residues 179–451 form the MYST-type HAT domain; it reads ARIRNINKIC…NGDLLADWQP (273 aa). The segment at 212–237 adopts a C2HC MYST-type zinc-finger fold; it reads VYICSFCFCYYGSERQFQRHREKCTL. An ESA1-RPD3 motif motif is present at residues 262–283; sequence RTWCRNICLLSKLFLDHKMLYY. N6-acetyllysine; by autocatalysis is present on Lys-279. Acetyl-CoA contacts are provided by residues 320–324 and 329–335; these read ACILT and QRHGYGK. Residue Glu-355 is the Proton donor/acceptor of the active site. Acetyl-CoA is bound at residue Ser-359.

It belongs to the MYST (SAS/MOZ) family. In terms of assembly, component of the NuA4 histone acetyltransferase complex. Interacts with arp4. Autoacetylation at Lys-279 is required for proper function.

It is found in the nucleus. Its subcellular location is the chromosome. It catalyses the reaction L-lysyl-[histone] + acetyl-CoA = N(6)-acetyl-L-lysyl-[histone] + CoA + H(+). The enzyme catalyses L-lysyl-[protein] + acetyl-CoA = N(6)-acetyl-L-lysyl-[protein] + CoA + H(+). The catalysed reaction is 2-hydroxyisobutanoyl-CoA + L-lysyl-[protein] = N(6)-(2-hydroxyisobutanoyl)-L-lysyl-[protein] + CoA + H(+). It carries out the reaction (2E)-butenoyl-CoA + L-lysyl-[protein] = N(6)-(2E)-butenoyl-L-lysyl-[protein] + CoA + H(+). In terms of biological role, catalytic component of the NuA4 histone acetyltransferase (HAT) complex which is involved in epigenetic transcriptional activation of selected genes principally by acetylation of nucleosomal histones H4, H3, H2B, H2A and H2A variant H2A.Z. Acetylates histone H4 to form H4K5ac, H4K8ac, H4K12ac and H4K16ac, histone H3 to form H3K14ac, and histone H2A to form H2AK4ac and H2AK7ac. The NuA4 complex is involved in the DNA damage response and is required for chromosome segregation. The NuA4 complex plays a direct role in repair of DNA double-strand breaks (DSBs) through homologous recombination. Recruitment to promoters depends on H3K4me. Also acetylates non-histone proteins. In addition to protein acetyltransferase, can use different acyl-CoA substrates, such as 2-hydroxyisobutanoyl-CoA (2-hydroxyisobutyryl-CoA) or (2E)-butenoyl-CoA (crotonyl-CoA), and is able to mediate protein 2-hydroxyisobutyrylation and crotonylation, respectively. The polypeptide is Histone acetyltransferase mst1 (Schizosaccharomyces pombe (strain 972 / ATCC 24843) (Fission yeast)).